A 428-amino-acid polypeptide reads, in one-letter code: RUN domain-containing protein 3A (428 aa).

The region spanning Asp52–Glu182 is the RUN domain. A coiled-coil region spans residues Glu237 to Ile314. The segment at His349–Gly375 is disordered.

This sequence belongs to the RUNDC3 family.

In Danio rerio (Zebrafish), this protein is RUN domain-containing protein 3A (rundc3a).